Consider the following 64-residue polypeptide: Large ribosomal subunit protein uL29 (64 aa).

This sequence belongs to the universal ribosomal protein uL29 family.

The protein is Large ribosomal subunit protein uL29 of Ralstonia pickettii (strain 12J).